Here is a 24-residue protein sequence, read N- to C-terminus: Cupiennin-5a (24 aa).

As to expression, expressed by the venom gland.

It is found in the secreted. The protein is Cupiennin-5a of Cupiennius salei (American wandering spider).